The following is a 168-amino-acid chain: Large ribosomal subunit protein uL5 (168 aa).

It belongs to the universal ribosomal protein uL5 family. In terms of assembly, part of the 50S ribosomal subunit; contacts the 5S rRNA and probably tRNA. Forms a bridge to the 30S subunit in the 70S ribosome.

Its function is as follows. This is one of the proteins that bind and probably mediate the attachment of the 5S RNA into the large ribosomal subunit, where it forms part of the central protuberance. In the 70S ribosome it contacts protein S13 of the 30S subunit (bridge B1b), connecting the 2 subunits; this bridge is implicated in subunit movement. May contact the P site tRNA; the 5S rRNA and some of its associated proteins might help stabilize positioning of ribosome-bound tRNAs. The protein is Large ribosomal subunit protein uL5 of Methanosphaera stadtmanae (strain ATCC 43021 / DSM 3091 / JCM 11832 / MCB-3).